The primary structure comprises 290 residues: UBX domain-containing protein 1-B (290 aa).

The UBA domain occupies 1-42 (MADCSALESLIEMGFSPSRAEKALSATGNQGIEPAMDWLVEH). The disordered stretch occupies residues 49–210 (KEPSVVIPED…VQEPPTKKEY (162 aa)). Basic and acidic residues-rich tracts occupy residues 80 to 117 (PLTE…EQEK) and 132 to 172 (RMQE…DRAR). Residues 81–171 (LTEEEKEKQT…KIARDKADRA (91 aa)) adopt a coiled-coil conformation. The span at 185–201 (PAETSVPATAPSPSSPV) shows a compositional bias: low complexity. In terms of domain architecture, UBX spans 208–287 (KEYDQCRIQV…GLVPTAVLIV (80 aa)).

Its subcellular location is the cytoplasm. Functionally, component of a complex required to couple deglycosylation and proteasome-mediated degradation of misfolded proteins in the endoplasmic reticulum that are retrotranslocated in the cytosol. Involved in ubiquitin-proteasome systems. This Xenopus laevis (African clawed frog) protein is UBX domain-containing protein 1-B (ubxn1-b).